We begin with the raw amino-acid sequence, 443 residues long: Porin D (443 aa).

The N-terminal stretch at 1 to 23 (MKVMKWSAIALAVSAGSTQFAVA) is a signal peptide. Residues H179, D231, and S319 contribute to the active site.

The protein belongs to the outer membrane porin (Opr) (TC 1.B.25) family.

It localises to the cell outer membrane. Porin with a specificity for basic amino acids. Involved in facilitated diffusion of carbapenem beta-lactam antibiotics, such as imipenem and meropenem. Also possesses serine protease activity. The sequence is that of Porin D (oprD) from Pseudomonas aeruginosa (strain ATCC 15692 / DSM 22644 / CIP 104116 / JCM 14847 / LMG 12228 / 1C / PRS 101 / PAO1).